The sequence spans 657 residues: MGLLETIQHPADLARLSDEQLVQLAQEIRDFLISNVAQTGGHLGPNLCVVELTLAIHRVFDSPRDSIIFDTGHQSYVHKLVTGRQHFSTLRQQGGLSGYADRGESVHDVVESSHASSSLSWADGISRARVLNGEGDRYVVAVIGDGALTGGMTWEALNNIAADKDRRVVIVVNDNGRSYAPTVGGLADYLRSLRPAIDSLRTHKAYEGNLDWTKNKLQNGGFLGQLMYKSLHAAKKGVKDWWAPQGLFEDLGMKYIGPVDGHDQKALESAMQTAKNYAGPVIVHAMTDKGRGYAPARADEADQFHAVGVIDPETGLPLDPSTAQSWTSVFAEEIAEIADERDDIVGITAAMLIPVGLHRMAERHPQRVIDVGIAEQHALTTAAGMAFGGLHPVVAMYATFLNRGFDQLLMDVALHKAGVTVVLDRAGVTGPDGPSHHGMWDLSMLQIIPGLHLAAPRDATRLREELREAVAISDAPTVLRYSKGNVGAEVEAIERLDDGVDILARRPAGSTENDVLLVSVGAMSEMSLQVANLLGAQGISSTVVDPRWVLPVPQSIIELAAQHRIVIVIEDGVRAGGVGSRIRQEMRAAGVDTALNEVGLPVEFLAHGSRGQVLDRVGLTAQKVAHDVVAQVLGTKVPFARPLPNEQITHTGQFPTL.

Residues histidine 73 and 113 to 115 (SHA) contribute to the thiamine diphosphate site. Aspartate 145 contacts Mg(2+). Thiamine diphosphate contacts are provided by residues 146–147 (GA), asparagine 175, tyrosine 293, and glutamate 375. Asparagine 175 contacts Mg(2+).

This sequence belongs to the transketolase family. DXPS subfamily. As to quaternary structure, homodimer. The cofactor is Mg(2+). Thiamine diphosphate is required as a cofactor.

It catalyses the reaction D-glyceraldehyde 3-phosphate + pyruvate + H(+) = 1-deoxy-D-xylulose 5-phosphate + CO2. Its pathway is metabolic intermediate biosynthesis; 1-deoxy-D-xylulose 5-phosphate biosynthesis; 1-deoxy-D-xylulose 5-phosphate from D-glyceraldehyde 3-phosphate and pyruvate: step 1/1. In terms of biological role, catalyzes the acyloin condensation reaction between C atoms 2 and 3 of pyruvate and glyceraldehyde 3-phosphate to yield 1-deoxy-D-xylulose-5-phosphate (DXP). In Renibacterium salmoninarum (strain ATCC 33209 / DSM 20767 / JCM 11484 / NBRC 15589 / NCIMB 2235), this protein is 1-deoxy-D-xylulose-5-phosphate synthase.